We begin with the raw amino-acid sequence, 311 residues long: Malate dehydrogenase (311 aa).

NAD(+)-binding positions include 7-13 (GAAGGIG) and D34. 2 residues coordinate substrate: R81 and R87. Residues N94 and 117–119 (ITN) contribute to the NAD(+) site. Positions 119 and 153 each coordinate substrate. The Proton acceptor role is filled by H177. M227 contributes to the NAD(+) binding site.

The protein belongs to the LDH/MDH superfamily. MDH type 1 family. In terms of assembly, homodimer.

It carries out the reaction (S)-malate + NAD(+) = oxaloacetate + NADH + H(+). In terms of biological role, catalyzes the reversible oxidation of malate to oxaloacetate. In Vibrio atlanticus (strain LGP32) (Vibrio splendidus (strain Mel32)), this protein is Malate dehydrogenase.